Consider the following 213-residue polypeptide: Large ribosomal subunit protein uL1 (213 aa).

The protein belongs to the universal ribosomal protein uL1 family. As to quaternary structure, part of the 50S ribosomal subunit.

In terms of biological role, binds directly to 23S rRNA. Probably involved in E site tRNA release. Functionally, protein L1 is also a translational repressor protein, it controls the translation of its operon by binding to its mRNA. This is Large ribosomal subunit protein uL1 from Methanoculleus marisnigri (strain ATCC 35101 / DSM 1498 / JR1).